Reading from the N-terminus, the 397-residue chain is Alpha-2B adrenergic receptor (397 aa).

Residues alanine 1–leucine 25 traverse the membrane as a helical segment. Residues threonine 26–leucine 36 are Cytoplasmic-facing. The chain crosses the membrane as a helical span at residues phenylalanine 37–leucine 62. The Extracellular portion of the chain corresponds to glycine 63–cysteine 72. Cysteines 72 and 151 form a disulfide. Residues lysine 73 to leucine 95 traverse the membrane as a helical segment. Residues aspartate 96 to lysine 117 are Cytoplasmic-facing. The helical transmembrane segment at cysteine 118–aspartate 140 threads the bilayer. Over glutamine 141–glutamate 156 the chain is Extracellular. Residues threonine 157–leucine 180 form a helical membrane-spanning segment. Topologically, residues arginine 181 to valine 361 are cytoplasmic. Disordered regions lie at residues glycine 193–proline 212 and alanine 230–proline 319. Acidic residues predominate over residues serine 280–glutamate 300. Residues proline 301–proline 319 show a composition bias toward low complexity. A helical membrane pass occupies residues leucine 362–isoleucine 385. Residues cysteine 386–histidine 394 are Extracellular-facing. A helical membrane pass occupies residues aspartate 395–phenylalanine 397.

The protein belongs to the G-protein coupled receptor 1 family. Adrenergic receptor subfamily. ADRA2B sub-subfamily. In terms of assembly, interacts with RAB26. Interacts with PPP1R9B.

The protein localises to the cell membrane. Functionally, alpha-2 adrenergic receptors mediate the catecholamine-induced inhibition of adenylate cyclase through the action of G proteins. The chain is Alpha-2B adrenergic receptor (ADRA2B) from Talpa europaea (European mole).